The following is a 456-amino-acid chain: Alcohol acyltransferase 16 (456 aa).

Residues His-167 and Asp-382 each act as proton acceptor in the active site.

It belongs to the plant acyltransferase family. As to expression, expressed in fruit.

The enzyme catalyses 3-(methylsulfanyl)propanoyl-CoA + butan-1-ol = butyl 3-(methylsulfanyl)propanoate + CoA. It catalyses the reaction ethanol + benzoyl-CoA = ethyl benzoate + CoA. The catalysed reaction is butan-1-ol + benzoyl-CoA = butyl benzoate + CoA. It carries out the reaction 2-(methylsulfanyl)acetyl-CoA + butan-1-ol = butyl 2-(methylsulfanyl)acetate + CoA. Its function is as follows. Involved in the biosynthesis of volatile esters which confer kiwifruit flavor. Alcohol acyl transferase that can use a wide range of alcohols as substrate to produce esters. Exhibits benzoyl-CoA:alcohol O-acyltransferase activity. In Actinidia chinensis var. chinensis (Chinese soft-hair kiwi), this protein is Alcohol acyltransferase 16.